Consider the following 1015-residue polypeptide: SPOC domain-containing protein 1 (1015 aa).

4 disordered regions span residues 73-97, 118-159, 213-320, and 344-406; these read MVSP…SPVL, GFSL…EPGG, LYPE…PRLE, and AASS…MTPL. The segment covering 304–320 has biased composition (basic and acidic residues); the sequence is SQDHAEGASKKDFPRLE. The segment covering 373–382 has biased composition (polar residues); sequence AHPTPCQSDP. Basic and acidic residues predominate over residues 388–397; sequence AEPHQQRAED. The TFIIS central domain occupies 410–530; that stretch reads VRSTVVRAMQ…IIEQQQKELY (121 aa). Residues 643–685 are disordered; that stretch reads IQKAPGPAPASSPEVLKVGETPPKEPQDRLQMPAGLKNAPPSP. The 104-residue stretch at 688-791 folds into the SPOC domain; it reads WEGSLDMFSI…VQQVKMVLLP (104 aa). Disordered stretches follow at residues 858-906 and 967-1015; these read PEDR…PGWG and QSQD…EHEC. Positions 967-978 are enriched in polar residues; that stretch reads QSQDSLPPSTVV.

Interacts with DNMT3A, DNMT3C and DNMT3L. Interacts with C19orf84 homolog. Interacts with SPIN1; promoting recruitment to transposons marked with histone H3 trimethylated at both 'Lys-4' and 'Lys-9' (H3K4me3K9me3).

It localises to the nucleus. The protein resides in the chromosome. In terms of biological role, protein adapter that acts as an essential executor of PIWIL4-piRNA pathway directed transposon DNA methylation and silencing in the male embryonic germ cells. Recruited to young transposons, which are specifically marked with histone H3 trimethylated at both 'Lys-4' and 'Lys-9' (H3K4me3K9me3), via its association with SPIN1 chromatin reader, and associates with the de novo DNA methylation machinery and repressive chromatin remodeling complexes. Following this, PIWIL4 engages with nascent transposable element transcript to direct piRNA-directed DNA methylation. Not required for piRNA biosynthesis. In Mus musculus (Mouse), this protein is SPOC domain-containing protein 1.